A 122-amino-acid chain; its full sequence is MIQQETRLKVADNSGAREILTIKVLGGSGRKFANIGDVIVASVKQATPGGAVKKGDVVKAVIVRTKTGARRPDGSYIKFDDNAAVIIRDDKTPRGTRIFGPVAREMREAGYMKIVSLAPEVL.

Belongs to the universal ribosomal protein uL14 family. In terms of assembly, part of the 50S ribosomal subunit. Forms a cluster with proteins L3 and L19. In the 70S ribosome, L14 and L19 interact and together make contacts with the 16S rRNA in bridges B5 and B8.

Binds to 23S rRNA. Forms part of two intersubunit bridges in the 70S ribosome. This is Large ribosomal subunit protein uL14 from Streptococcus uberis (strain ATCC BAA-854 / 0140J).